The following is a 655-amino-acid chain: MGIFTIASQHIRFAVKLASAIVLALFVGFHFQLETPRWAVLTAAIVAAGPAFAAGGEPYSGAIRYRGMLRIIGTFIGCIAALTIIILMIRTPLLMVLVCCIWAGFCTWLSSLVKVENSYAWGLAGYTALIIVITIQTEPLLAPQFAVERCSEIVIGIVCAIVADLLFSPRSIKQEVDRELDALIVSQYQLMQLCIKHGDSEEVDKAWSGLVRRTQALEGMRSNLNMESSRWARANRRLKAINTVSLTLITQACETYLIQNTRPESVTDTFRELFAEPVETVQDVHKQLKRMRRVIAWTGERDTPVTIYTWVGAATRYLLLKRGVIGNTKISAAEEEVLQGEVVIKAESAERHHAMVNFWRTTLACMLGTLFWLWTGWTSGSGAMVMIAVVTALAMRLPNPRMVAIDFLYGTIAALPLGALYFLVILPSTQQSMLLLCISLAVMAFFIGIEVQKRRLGSLGALASTINILVLDNPMTFHFSQFLDSALGQLVGCFLAMMVILLVRDNSQARTGRVLLNQFVSAAVSSMTTNTARRKENHLPALYQQLFLLLNKFPGDIARFRLALTMIIAHQRLRNAPVPINDDLSAFHRQLRRTADHVLSASSDDKRRRYFKQLLEELDVYQEKLRVWEAPPQVTEPVARLVFMLHRYQNVLTDN.

Helical transmembrane passes span 13-33 (FAVK…HFQL), 38-58 (WAVL…GGEP), 69-89 (LRII…ILMI), 93-113 (LLMV…SSLV), 121-141 (WGLA…EPLL), 152-172 (EIVI…PRSI), 370-390 (LFWL…IAVV), 407-427 (FLYG…VILP), 431-451 (QSML…GIEV), 459-479 (LGAL…TFHF), and 482-502 (FLDS…VILL).

The protein belongs to the aromatic acid exporter ArAE (TC 2.A.85) family.

It is found in the cell inner membrane. Its function is as follows. Forms an efflux pump with AaeA. Could function as a metabolic relief valve, allowing to eliminate certain compounds when they accumulate to high levels in the cell. The sequence is that of p-hydroxybenzoic acid efflux pump subunit AaeB from Enterobacter cloacae subsp. cloacae (strain ATCC 13047 / DSM 30054 / NBRC 13535 / NCTC 10005 / WDCM 00083 / NCDC 279-56).